The primary structure comprises 79 residues: Conotoxin Kt6.1 (79 aa).

The first 22 residues, 1–22 (MKLTCVLIISVLFLTASQLITA), serve as a signal peptide directing secretion. Residues 23 to 47 (VYSRDKQQYRAARLRDEMRNLKGAR) constitute a propeptide that is removed on maturation. Disulfide bonds link cysteine 49–cysteine 62, cysteine 56–cysteine 67, and cysteine 61–cysteine 77. 2 positions are modified to 4-hydroxyproline: proline 60 and proline 63.

It belongs to the conotoxin O1 superfamily. As to expression, expressed by the venom duct.

It localises to the secreted. Ion channel inhibitor that inhibits the increase in intracellular calcium upon depolarization in DRG neurons. In vivo, both intraperitoneal and intracranial injections into mice induce hyperactivity. The protein is Conotoxin Kt6.1 of Conus kintoki (Cone snail).